The following is a 131-amino-acid chain: Small ribosomal subunit protein uS8 (131 aa).

The protein belongs to the universal ribosomal protein uS8 family. As to quaternary structure, part of the 30S ribosomal subunit. Contacts proteins S5 and S12.

In terms of biological role, one of the primary rRNA binding proteins, it binds directly to 16S rRNA central domain where it helps coordinate assembly of the platform of the 30S subunit. In Burkholderia ambifaria (strain MC40-6), this protein is Small ribosomal subunit protein uS8.